We begin with the raw amino-acid sequence, 318 residues long: Aspartate carbamoyltransferase catalytic subunit (318 aa).

Residues arginine 57 and threonine 58 each contribute to the carbamoyl phosphate site. Lysine 85 serves as a coordination point for L-aspartate. Residues arginine 107, histidine 141, and glutamine 144 each contribute to the carbamoyl phosphate site. Residues arginine 174 and arginine 228 each coordinate L-aspartate. Carbamoyl phosphate contacts are provided by glycine 269 and proline 270.

It belongs to the aspartate/ornithine carbamoyltransferase superfamily. ATCase family. Heterododecamer (2C3:3R2) of six catalytic PyrB chains organized as two trimers (C3), and six regulatory PyrI chains organized as three dimers (R2).

The enzyme catalyses carbamoyl phosphate + L-aspartate = N-carbamoyl-L-aspartate + phosphate + H(+). It participates in pyrimidine metabolism; UMP biosynthesis via de novo pathway; (S)-dihydroorotate from bicarbonate: step 2/3. In terms of biological role, catalyzes the condensation of carbamoyl phosphate and aspartate to form carbamoyl aspartate and inorganic phosphate, the committed step in the de novo pyrimidine nucleotide biosynthesis pathway. In Mycolicibacterium smegmatis (strain ATCC 700084 / mc(2)155) (Mycobacterium smegmatis), this protein is Aspartate carbamoyltransferase catalytic subunit.